The chain runs to 100 residues: Elastin (100 aa).

A 4-hydroxyproline mark is found at P72 and P86. An intrachain disulfide couples C90 to C95.

This sequence belongs to the elastin family. In terms of assembly, the polymeric elastin chains are cross-linked together into an extensible 3D network. Forms a ternary complex with BGN and MFAP2. Interacts with MFAP2 via divalent cations (calcium &gt; magnesium &gt; manganese) in a dose-dependent and saturating manner. Interacts with FBLN5 and FBN1. Forms a ternary complex with FBN1 and FBLN2 or FBLN5. Interacts with MFAP4 in a Ca (2+)-dependent manner; this interaction promotes ELN self-assembly. Interacts with EFEMP2 with moderate affinity. Elastin is formed through the cross-linking of its soluble precursor tropoelastin. Cross-linking is initiated through the action of lysyl oxidase on exposed lysines to form allysine. Subsequent spontaneous condensation reactions with other allysine or unmodified lysine residues result in various bi-, tri-, and tetrafunctional cross-links. The most abundant cross-links in mature elastin fibers are lysinonorleucine, allysine aldol, desmosine, and isodesmosine. Post-translationally, hydroxylation on proline residues within the sequence motif, GXPG, is most likely to be 4-hydroxy as this fits the requirement for 4-hydroxylation in vertebrates.

The protein resides in the secreted. The protein localises to the extracellular space. It is found in the extracellular matrix. In terms of biological role, major structural protein of tissues such as aorta and nuchal ligament, which must expand rapidly and recover completely. Molecular determinant of the late arterial morphogenesis, stabilizing arterial structure by regulating proliferation and organization of vascular smooth muscle. The chain is Elastin (ELN) from Ovis aries (Sheep).